A 419-amino-acid polypeptide reads, in one-letter code: Peptide chain release factor subunit 1 (419 aa).

The protein belongs to the eukaryotic release factor 1 family. Heterodimer of two subunits, one of which binds GTP.

It is found in the cytoplasm. Its function is as follows. Directs the termination of nascent peptide synthesis (translation) in response to the termination codons UAA, UAG and UGA. The sequence is that of Peptide chain release factor subunit 1 from Methanococcus vannielii (strain ATCC 35089 / DSM 1224 / JCM 13029 / OCM 148 / SB).